The following is a 646-amino-acid chain: Acetyl-coenzyme A synthetase (646 aa).

CoA is bound by residues 190 to 193 and Thr309; that span reads RAGN. ATP is bound by residues 385–387, 409–414, Asp498, and Arg513; these read GEP and DTWWQT. Ser521 lines the CoA pocket. Residue Arg524 coordinates ATP. Mg(2+) contacts are provided by Val535, His537, and Val540. Arg582 contacts CoA. At Lys607 the chain carries N6-acetyllysine.

This sequence belongs to the ATP-dependent AMP-binding enzyme family. The cofactor is Mg(2+). Post-translationally, acetylated. Deacetylation by the SIR2-homolog deacetylase activates the enzyme.

The enzyme catalyses acetate + ATP + CoA = acetyl-CoA + AMP + diphosphate. In terms of biological role, catalyzes the conversion of acetate into acetyl-CoA (AcCoA), an essential intermediate at the junction of anabolic and catabolic pathways. AcsA undergoes a two-step reaction. In the first half reaction, AcsA combines acetate with ATP to form acetyl-adenylate (AcAMP) intermediate. In the second half reaction, it can then transfer the acetyl group from AcAMP to the sulfhydryl group of CoA, forming the product AcCoA. This Pseudoalteromonas translucida (strain TAC 125) protein is Acetyl-coenzyme A synthetase.